Here is a 1242-residue protein sequence, read N- to C-terminus: DNA-directed RNA polymerase RPB2 homolog (1242 aa).

The C4-type zinc finger occupies 1180–1201 (CRNCGEPAIYNASHPIYKCMNC).

The protein belongs to the RNA polymerase beta chain family. As to quaternary structure, part of the viral DNA-directed RNA polymerase that consists of 8 polII-like subunits (RPB1, RPB2, RPB3, RPB5, RPB6, RPB7, RPB9, RPB10), a capping enzyme and a termination factor.

The protein resides in the host cytoplasm. Its subcellular location is the virion. It carries out the reaction RNA(n) + a ribonucleoside 5'-triphosphate = RNA(n+1) + diphosphate. In terms of biological role, catalytic component of the DNA-directed RNA polymerase (RNAP) that catalyzes the transcription in the cytoplasm of viral DNA into RNA using the four ribonucleoside triphosphates as substrates. Forms the polymerase active center together with RPB1. Part of the core element with the central large cleft, the clamp element that moves to open and close the cleft and the jaws that are thought to grab the incoming DNA template. The sequence is that of DNA-directed RNA polymerase RPB2 homolog from African swine fever virus (isolate Pig/Kenya/KEN-50/1950) (ASFV).